Consider the following 1192-residue polypeptide: Protein pangolin, isoform J (1192 aa).

A Nuclear localization signal motif is present at residues 351-357; the sequence is LGLPSEE. Positions 691–713 are disordered; it reads AKHTSNAQSNESKETTNDKKKPH. Positions 714–782 form a DNA-binding region, HMG box; the sequence is IKKPLNAFML…LHMELYPGWS (69 aa). Disordered stretches follow at residues 790-812, 847-916, 955-986, and 1136-1192; these read VSKK…NMKK, PAED…SPST, QRPT…VSPV, and QLNN…ISVS. Residues 862 to 871 are compositionally biased toward acidic residues; the sequence is SDDDEDDYDD. 2 stretches are compositionally biased toward low complexity: residues 898–915 and 957–986; these read SMPS…QSPS and PTLV…VSPV. Polar residues-rich tracts occupy residues 1140–1162 and 1170–1192; these read RTEN…VNSS and SQAI…ISVS.

Belongs to the TCF/LEF family. As to quaternary structure, binds to the beta-catenin homolog arm or to gro.

It localises to the nucleus. Functionally, segment polarity protein. Functions together with arm to transduce the Wingless (Wg) signal in embryos and in developing adult tissues. Acts as a transcriptional activator, but in the absence of arm, it binds to gro and acts as a transcriptional repressor of wg-responsive genes. In Drosophila melanogaster (Fruit fly), this protein is Protein pangolin, isoform J.